The sequence spans 317 residues: Glycine--tRNA ligase alpha subunit (317 aa).

The protein belongs to the class-II aminoacyl-tRNA synthetase family. As to quaternary structure, tetramer of two alpha and two beta subunits.

The protein localises to the cytoplasm. It catalyses the reaction tRNA(Gly) + glycine + ATP = glycyl-tRNA(Gly) + AMP + diphosphate. The sequence is that of Glycine--tRNA ligase alpha subunit from Pseudomonas fluorescens (strain SBW25).